The primary structure comprises 394 residues: Argininosuccinate synthase (394 aa).

ATP is bound by residues 7 to 15 and alanine 35; that span reads AYSGGLDTS. Tyrosine 85 contributes to the L-citrulline binding site. Position 115 (glycine 115) interacts with ATP. Residues threonine 117, asparagine 121, and aspartate 122 each coordinate L-aspartate. Residue asparagine 121 participates in L-citrulline binding. Residues arginine 125, serine 174, serine 183, glutamate 258, and tyrosine 270 each coordinate L-citrulline.

It belongs to the argininosuccinate synthase family. Type 1 subfamily. In terms of assembly, homotetramer.

The protein resides in the cytoplasm. It carries out the reaction L-citrulline + L-aspartate + ATP = 2-(N(omega)-L-arginino)succinate + AMP + diphosphate + H(+). It participates in amino-acid biosynthesis; L-arginine biosynthesis; L-arginine from L-ornithine and carbamoyl phosphate: step 2/3. The sequence is that of Argininosuccinate synthase from Methanopyrus kandleri (strain AV19 / DSM 6324 / JCM 9639 / NBRC 100938).